The chain runs to 233 residues: uncharacterized protein (233 aa).

Disordered stretches follow at residues 1–159 (MGKH…NEKL) and 181–206 (MGVKNAPKPTDDSSRLSDEKNRQDKM). Basic and acidic residues predominate over residues 36 to 115 (RDRSRSPHKE…RRDDKNRLSA (80 aa)). Residues 135-148 (SSSSNTTDTASSSS) are compositionally biased toward low complexity. A compositionally biased stretch (basic and acidic residues) spans 189 to 206 (PTDDSSRLSDEKNRQDKM).

This is an uncharacterized protein from Caenorhabditis elegans.